A 778-amino-acid polypeptide reads, in one-letter code: Double zinc ribbon and ankyrin repeat-containing protein 1 (778 aa).

Phosphoserine occurs at positions 179 and 201. 2 DZANK-type zinc fingers span residues 230 to 289 (CAHC…CVVC) and 359 to 407 (CSRC…GSCG). ANK repeat units follow at residues 631 to 662 (ENKL…DPNC) and 666 to 695 (QGRP…DIDQ). A Phosphoserine modification is found at Ser-768.

Interacts with NINL. Associates with DYNC1H1 and multiple dynein intermediate and light chains as well as actin-binding proteins.

It is found in the cytoplasm. It localises to the cytoskeleton. The protein localises to the microtubule organizing center. The protein resides in the centrosome. Its subcellular location is the cilium basal body. In terms of biological role, involved in vesicle transport in photoreceptor cells. This is Double zinc ribbon and ankyrin repeat-containing protein 1 (Dzank1) from Mus musculus (Mouse).